Consider the following 66-residue polypeptide: Sodium/potassium-transporting ATPase subunit gamma (66 aa).

Residues 29-46 (GGLIFAGLAFIVGLLILL) form a helical membrane-spanning segment.

It belongs to the FXYD family. As to quaternary structure, regulatory subunit of the sodium/potassium-transporting ATPase which is composed of a catalytic alpha subunit, an auxiliary non-catalytic beta subunit and an additional regulatory subunit. In terms of tissue distribution, expressed in the distal convoluted tubule in the kidney. Found on basolateral membranes of nephron epithelial cells.

It localises to the membrane. Functionally, may be involved in forming the receptor site for cardiac glycoside binding or may modulate the transport function of the sodium ATPase. In Homo sapiens (Human), this protein is Sodium/potassium-transporting ATPase subunit gamma (FXYD2).